The primary structure comprises 175 residues: Granulocyte colony-stimulating factor (175 aa).

Disulfide bonds link cysteine 37–cysteine 43 and cysteine 65–cysteine 75. Residue threonine 134 is glycosylated (O-linked (GalNAc...) threonine).

It belongs to the IL-6 superfamily. In terms of assembly, monomer. In terms of processing, O-glycosylated.

Its subcellular location is the secreted. In terms of biological role, granulocyte/macrophage colony-stimulating factors are cytokines that act in hematopoiesis by controlling the production, differentiation, and function of 2 related white cell populations of the blood, the granulocytes and the monocytes-macrophages. This CSF induces granulocytes. In Canis lupus familiaris (Dog), this protein is Granulocyte colony-stimulating factor (CSF3).